The sequence spans 310 residues: Proline iminopeptidase (310 aa).

An AB hydrolase-1 domain is found at 33–290; sequence PVIFLHGGPG…RVVQAGHRAF (258 aa). Residue Ser107 is the Nucleophile of the active site. Asp260 is an active-site residue. Catalysis depends on His287, which acts as the Proton donor.

Belongs to the peptidase S33 family.

The protein localises to the cytoplasm. It catalyses the reaction Release of N-terminal proline from a peptide.. Functionally, specifically catalyzes the removal of N-terminal proline residues from peptides. The chain is Proline iminopeptidase (pip) from Neisseria meningitidis serogroup A / serotype 4A (strain DSM 15465 / Z2491).